A 221-amino-acid chain; its full sequence is 2-amino-5-formylamino-6-ribosylaminopyrimidin-4(3H)-one 5'-monophosphate deformylase (221 aa).

Fe cation-binding residues include E29, H31, D40, and H108.

Belongs to the creatininase superfamily. FAPy deformylase family. Homodimer. The cofactor is Fe(2+). It depends on Zn(2+) as a cofactor.

The enzyme catalyses 2-amino-5-formylamino-6-(5-phospho-D-ribosylamino)pyrimidin-4(3H)-one + H2O = 2,5-diamino-6-(1-D-ribosylamino)pyrimidin-4(3H)-one 5'-phosphate + formate + H(+). The protein operates within cofactor biosynthesis; coenzyme F420 biosynthesis. Its pathway is cofactor biosynthesis; riboflavin biosynthesis. Functionally, catalyzes the hydrolysis of the formamide of 2-amino-5-formylamino-6-ribosylamino-4(3H)-pyrimidinone 5'-monophosphate (FAPy) to form 2,5-diamino-6-ribosylamino-4(3H)-pyrimidinone 5'-phosphate (APy). This Methanococcus maripaludis (strain DSM 14266 / JCM 13030 / NBRC 101832 / S2 / LL) protein is 2-amino-5-formylamino-6-ribosylaminopyrimidin-4(3H)-one 5'-monophosphate deformylase.